We begin with the raw amino-acid sequence, 449 residues long: Nuclear hormone receptor family member nhr-43 (449 aa).

The segment at residues 44-122 (NIHCRVCERR…VGLNVDAVVG (79 aa)) is a DNA-binding region (nuclear receptor). 2 NR C4-type zinc fingers span residues 47-68 (CRVC…CRAC) and 84-105 (CRRG…CQKC). Residues 125–142 (SPDHVKTTSRDESVKKED) show a composition bias toward basic and acidic residues. The disordered stretch occupies residues 125–154 (SPDHVKTTSRDESVKKEDEESDTGSEGKSC). One can recognise an NR LBD domain in the interval 200–449 (NYNEFTKSRL…SDLNAYLYSI (250 aa)).

It localises to the nucleus. In terms of biological role, ligand-activated transcription factor. Positively modulates expression of homeobox protein lin-39, perhaps by binding to the sequence motif 5'-TGAC-3' in regulatory regions of the lin-39 gene, acting in the embryo, and also in the vulval lineage. The chain is Nuclear hormone receptor family member nhr-43 from Caenorhabditis elegans.